The sequence spans 395 residues: Bifunctional enzyme IspD/IspF (395 aa).

A 2-C-methyl-D-erythritol 4-phosphate cytidylyltransferase region spans residues 1–237; the sequence is MRTWVLLLAA…DANEPQVTVP (237 aa). The segment at 238 to 395 is 2-C-methyl-D-erythritol 2,4-cyclodiphosphate synthase; it reads CVGWGYDVHR…AAVTGLRPMP (158 aa). 2 residues coordinate a divalent metal cation: aspartate 244 and histidine 246. 4-CDP-2-C-methyl-D-erythritol 2-phosphate is bound by residues 244–246 and 270–271; these read DVH and HS. Histidine 278 contributes to the a divalent metal cation binding site. 4-CDP-2-C-methyl-D-erythritol 2-phosphate-binding positions include 292 to 294, 297 to 301, 368 to 371, and phenylalanine 375; these read DIG, FPDSD, and TTEE.

The protein in the N-terminal section; belongs to the IspD/TarI cytidylyltransferase family. IspD subfamily. In the C-terminal section; belongs to the IspF family. Requires a divalent metal cation as cofactor.

The enzyme catalyses 2-C-methyl-D-erythritol 4-phosphate + CTP + H(+) = 4-CDP-2-C-methyl-D-erythritol + diphosphate. It carries out the reaction 4-CDP-2-C-methyl-D-erythritol 2-phosphate = 2-C-methyl-D-erythritol 2,4-cyclic diphosphate + CMP. The protein operates within isoprenoid biosynthesis; isopentenyl diphosphate biosynthesis via DXP pathway; isopentenyl diphosphate from 1-deoxy-D-xylulose 5-phosphate: step 2/6. It participates in isoprenoid biosynthesis; isopentenyl diphosphate biosynthesis via DXP pathway; isopentenyl diphosphate from 1-deoxy-D-xylulose 5-phosphate: step 4/6. In terms of biological role, bifunctional enzyme that catalyzes the formation of 4-diphosphocytidyl-2-C-methyl-D-erythritol from CTP and 2-C-methyl-D-erythritol 4-phosphate (MEP) (IspD), and catalyzes the conversion of 4-diphosphocytidyl-2-C-methyl-D-erythritol 2-phosphate (CDP-ME2P) to 2-C-methyl-D-erythritol 2,4-cyclodiphosphate (ME-CPP) with a corresponding release of cytidine 5-monophosphate (CMP) (IspF). The protein is Bifunctional enzyme IspD/IspF of Nitratidesulfovibrio vulgaris (strain ATCC 29579 / DSM 644 / CCUG 34227 / NCIMB 8303 / VKM B-1760 / Hildenborough) (Desulfovibrio vulgaris).